The chain runs to 388 residues: Phosphopentomutase (388 aa).

Mn(2+) is bound by residues Asp-11, Asp-283, His-288, Asp-324, His-325, and His-336.

It belongs to the phosphopentomutase family. Mn(2+) serves as cofactor.

It is found in the cytoplasm. The catalysed reaction is 2-deoxy-alpha-D-ribose 1-phosphate = 2-deoxy-D-ribose 5-phosphate. It carries out the reaction alpha-D-ribose 1-phosphate = D-ribose 5-phosphate. The protein operates within carbohydrate degradation; 2-deoxy-D-ribose 1-phosphate degradation; D-glyceraldehyde 3-phosphate and acetaldehyde from 2-deoxy-alpha-D-ribose 1-phosphate: step 1/2. In terms of biological role, isomerase that catalyzes the conversion of deoxy-ribose 1-phosphate (dRib-1-P) and ribose 1-phosphate (Rib-1-P) to deoxy-ribose 5-phosphate (dRib-5-P) and ribose 5-phosphate (Rib-5-P), respectively. In Anaeromyxobacter sp. (strain K), this protein is Phosphopentomutase.